We begin with the raw amino-acid sequence, 584 residues long: MASVQASRRQWCYLCDLPKMPWAMVWDFSEAVCRGCVNFEGADRIELLIDAARQLKRSHVLPEGRSPGPPALKHPTSKDLASTGSQGSQLPPPQAQAQPSGTGGSVSGPDRYDRATSSSRLALPSPALEYTLGSRLANGLGREEAVAEGARRALLGSIPSLMPPGLLAAAVSGLGGRALTLAPGLSPARPLFGSDFEKEKQQRNADCLAELNEAMRGRAEEWHGRPKAVREQLLALSACAPFNVRFKKDHGLVGRVFAFDATARPPGYEFELKLFTEYPCGSGNVYAGVLAVARQMFHDALREPGKALASSGFKYLEYERRHGSGEWRQLGELLTDGVRSFREPAPAEALPQQYPEPAPAALCGPPPRAPSRNLAPTPRRRKASPEPEGETAGKMTTEEQQQRHWVAPGGPYSSETPGVPSPIAALKNVAEALGHSPKDPGGGGGSVRAGGASPAASSTTQPPAQHRLVARNGEAEVSPTAGAEAVSGGGSGTGATPGAPLCCTLCRERLEDTHFVQCPSVPGHKFCFPCSREFIKAQGPAGEVYCPSGDKCPLVGSSVPWAFMQGEIATILAGDIKVKKERDP.

Positions 59 to 120 (HVLPEGRSPG…RYDRATSSSR (62 aa)) are disordered. Serine 66 carries the phosphoserine modification. Low complexity predominate over residues 82–100 (STGSQGSQLPPPQAQAQPS). Serine 125 is subject to Phosphoserine. Arginine 177 is subject to Omega-N-methylarginine. Phosphoserine is present on serine 186. Residues 197–217 (EKEKQQRNADCLAELNEAMRG) are a coiled coil. A Glycyl lysine isopeptide (Lys-Gly) (interchain with G-Cter in SUMO2) cross-link involves residue lysine 227. Disordered regions lie at residues 346–421 (PAEA…GVPS) and 433–495 (LGHS…GTGA). Pro residues predominate over residues 354–369 (YPEPAPAALCGPPPRA). Phosphoserine is present on residues serine 371, serine 384, serine 421, and serine 436. A Glycyl lysine isopeptide (Lys-Gly) (interchain with G-Cter in SUMO2) cross-link involves residue lysine 438. Residues 449–458 (AGGASPAASS) are compositionally biased toward low complexity. Residues serine 453 and serine 457 each carry the phosphoserine modification. The segment at 503 to 550 (CTLCRERLEDTHFVQCPSVPGHKFCFPCSREFIKAQGPAGEVYCPSGD) adopts an RING-type; degenerate zinc-finger fold. Residues 503-550 (CTLCRERLEDTHFVQCPSVPGHKFCFPCSREFIKAQGPAGEVYCPSGD) form a cys-rich region.

Belongs to the IRF2BP family. In terms of assembly, interacts with IRF2. Part of a corepressor complex containing IRF2 and IRF2BP2. Interacts with JDP2.

The protein resides in the nucleus. The enzyme catalyses S-ubiquitinyl-[E2 ubiquitin-conjugating enzyme]-L-cysteine + [acceptor protein]-L-lysine = [E2 ubiquitin-conjugating enzyme]-L-cysteine + N(6)-ubiquitinyl-[acceptor protein]-L-lysine.. Acts as a transcriptional corepressor in a IRF2-dependent manner; this repression is not mediated by histone deacetylase activities. May act as an E3 ligase towards JDP2, enhancing its polyubiquitination. Represses ATF2-dependent transcriptional activation. The sequence is that of Interferon regulatory factor 2-binding protein 1 (Irf2bp1) from Mus musculus (Mouse).